We begin with the raw amino-acid sequence, 407 residues long: Prolyl hydroxylase EGLN2 (407 aa).

Low complexity-rich tracts occupy residues 1 to 24 (MDSPCQPQPLSQALPQLPGSSSEP) and 57 to 75 (ASAGSGTPRATATSTTASP). Disordered regions lie at residues 1 to 34 (MDSPCQPQPLSQALPQLPGSSSEPLEPEPGRARM), 50 to 89 (CPGVPSEASAGSGTPRATATSTTASPLRDGFGGQDGGELR), and 108 to 157 (AAQG…CSSG). Residues 89–134 (RPLQSEGAAALVTKGCQRLAAQGARPEAPKRKWAEDGGDAPSPSKR) carry the Bipartite nuclear localization signal motif. Ser-130 is modified (phosphoserine). Residues 225–235 (VSQRAIPPRSI) are beta(2)beta(3) 'finger-like' loop. The Fe2OG dioxygenase domain occupies 278 to 376 (GRTKAMVACY…RYAITVWYFD (99 aa)). Fe cation contacts are provided by His-297, Asp-299, and His-358. A 2-oxoglutarate-binding site is contributed by Arg-367.

In terms of assembly, interacts (preferably isoform p40) with SIAH2; the interaction targets both SIAH2 isoforms for proteasomal degradation in vitro. Interacts with LIMD1, WTIP and AJUBA. The cofactor is Fe(2+). Requires L-ascorbate as cofactor. In terms of processing, ubiquitinated by SIAH1 and/or SIAH2 in response to the unfolded protein response (UPR), leading to its degradation. Expressed in adult and fetal heart, brain, liver, lung, skeletal muscle, and kidney. Also expressed in testis and placenta. Highest levels in adult brain, placenta, lung, kidney, and testis. Expressed in hormone responsive tissues, including normal and cancerous mammary, ovarian and prostate epithelium.

The protein resides in the nucleus. The enzyme catalyses L-prolyl-[protein] + 2-oxoglutarate + O2 = trans-4-hydroxy-L-prolyl-[protein] + succinate + CO2. It carries out the reaction L-prolyl-[hypoxia-inducible factor alpha subunit] + 2-oxoglutarate + O2 = trans-4-hydroxy-L-prolyl-[hypoxia-inducible factor alpha subunit] + succinate + CO2. Prolyl hydroxylase that mediates hydroxylation of proline residues in target proteins, such as ATF4, IKBKB, CEP192 and HIF1A. Target proteins are preferentially recognized via a LXXLAP motif. Cellular oxygen sensor that catalyzes, under normoxic conditions, the post-translational formation of 4-hydroxyproline in hypoxia-inducible factor (HIF) alpha proteins. Hydroxylates a specific proline found in each of the oxygen-dependent degradation (ODD) domains (N-terminal, NODD, and C-terminal, CODD) of HIF1A. Also hydroxylates HIF2A. Has a preference for the CODD site for both HIF1A and HIF2A. Hydroxylated HIFs are then targeted for proteasomal degradation via the von Hippel-Lindau ubiquitination complex. Under hypoxic conditions, the hydroxylation reaction is attenuated allowing HIFs to escape degradation resulting in their translocation to the nucleus, heterodimerization with HIF1B, and increased expression of hypoxy-inducible genes. EGLN2 is involved in regulating hypoxia tolerance and apoptosis in cardiac and skeletal muscle. Also regulates susceptibility to normoxic oxidative neuronal death. Links oxygen sensing to cell cycle and primary cilia formation by hydroxylating the critical centrosome component CEP192 which promotes its ubiquitination and subsequent proteasomal degradation. Hydroxylates IKBKB, mediating NF-kappa-B activation in hypoxic conditions. Also mediates hydroxylation of ATF4, leading to decreased protein stability of ATF4. The protein is Prolyl hydroxylase EGLN2 of Homo sapiens (Human).